The following is a 369-amino-acid chain: Protein FAM187B (369 aa).

The signal sequence occupies residues 1 to 17 (MPPMLWLLLHFAAPALG). At 18 to 335 (FYFSISCPSG…RADSVLKGLK (318 aa)) the chain is on the extracellular side. N-linked (GlcNAc...) asparagine glycosylation is found at N45, N68, and N130. The helical transmembrane segment at 336 to 356 (LVLLVVTVLALLGALLKCIHP) threads the bilayer. Residues 357–369 (SPGRRSTQVLVVK) lie on the Cytoplasmic side of the membrane.

It belongs to the FAM187 family.

The protein resides in the membrane. This is Protein FAM187B (FAM187B) from Homo sapiens (Human).